The sequence spans 320 residues: Glutathione synthetase (320 aa).

Positions 133 to 317 constitute an ATP-grasp domain; the sequence is KMYTLQFAAV…LGEKVICWLE (185 aa). 159 to 215 serves as a coordination point for ATP; it reads LEEHGAAVLKPLGGKAGEGILFLDPGDRNFNSLVEISTQHGKEPVMVQRFLPEAKEG. Positions 288 and 290 each coordinate Mg(2+).

The protein belongs to the prokaryotic GSH synthase family. The cofactor is Mg(2+). Mn(2+) is required as a cofactor.

The enzyme catalyses gamma-L-glutamyl-L-cysteine + glycine + ATP = glutathione + ADP + phosphate + H(+). It participates in sulfur metabolism; glutathione biosynthesis; glutathione from L-cysteine and L-glutamate: step 2/2. This is Glutathione synthetase from Synechocystis sp. (strain ATCC 27184 / PCC 6803 / Kazusa).